The following is a 368-amino-acid chain: Peptide chain release factor 2 (368 aa).

The residue at position 251 (Gln251) is an N5-methylglutamine.

It belongs to the prokaryotic/mitochondrial release factor family. Methylated by PrmC. Methylation increases the termination efficiency of RF2.

The protein localises to the cytoplasm. In terms of biological role, peptide chain release factor 2 directs the termination of translation in response to the peptide chain termination codons UGA and UAA. This Streptomyces avermitilis (strain ATCC 31267 / DSM 46492 / JCM 5070 / NBRC 14893 / NCIMB 12804 / NRRL 8165 / MA-4680) protein is Peptide chain release factor 2.